The chain runs to 238 residues: N-(5'-phosphoribosyl)anthranilate isomerase (238 aa).

This sequence belongs to the TrpF family.

The enzyme catalyses N-(5-phospho-beta-D-ribosyl)anthranilate = 1-(2-carboxyphenylamino)-1-deoxy-D-ribulose 5-phosphate. The protein operates within amino-acid biosynthesis; L-tryptophan biosynthesis; L-tryptophan from chorismate: step 3/5. The sequence is that of N-(5'-phosphoribosyl)anthranilate isomerase from Methanosarcina acetivorans (strain ATCC 35395 / DSM 2834 / JCM 12185 / C2A).